The sequence spans 359 residues: UPF0284 protein MAE_56900 (359 aa).

This sequence belongs to the UPF0284 family.

The sequence is that of UPF0284 protein MAE_56900 from Microcystis aeruginosa (strain NIES-843 / IAM M-2473).